We begin with the raw amino-acid sequence, 657 residues long: Glycogen debranching enzyme (657 aa).

Aspartate 336 serves as the catalytic Nucleophile. The active-site Proton donor is the glutamate 371. The segment at 460 to 479 (ANGEENRDGTNNNYSNNHGK) is disordered.

The protein belongs to the glycosyl hydrolase 13 family.

The enzyme catalyses Hydrolysis of (1-&gt;6)-alpha-D-glucosidic linkages to branches with degrees of polymerization of three or four glucose residues in limit dextrin.. The protein operates within glycan degradation; glycogen degradation. Its function is as follows. Removes maltotriose and maltotetraose chains that are attached by 1,6-alpha-linkage to the limit dextrin main chain, generating a debranched limit dextrin. This chain is Glycogen debranching enzyme, found in Escherichia coli O9:H4 (strain HS).